Here is a 303-residue protein sequence, read N- to C-terminus: Probable cell division protein WhiA (303 aa).

The H-T-H motif DNA-binding region spans 272–303; sequence SIQQVADALEFPITKSGVNHRLRKINKIADDL.

It belongs to the WhiA family.

Functionally, involved in cell division and chromosome segregation. The protein is Probable cell division protein WhiA of Streptococcus pyogenes serotype M3 (strain ATCC BAA-595 / MGAS315).